Consider the following 733-residue polypeptide: MERRSESPCLRDSPDRRSGSPDVKGPPPVKVARLEQNGSPMGARGRPNGAVAKAVGGLMIPVFCVVEQLDGSLEYDNREEHAEFVLVRKDVLFSQLVETALLALGYSHSSAAQAQGIIKLGRWNPLPLSYVTDAPDATVADMLQDVYHVVTLKIQLQSCSKLEDLPAEQWNHATVRNALKELLKEMNQSTLAKECPLSQSMISSIVNSTYYANVSATKCQEFGRWYKKYKKIKVERVERENLSDYCVLGQRPMHLPNMNQLASLGKTNEQSPHSQIHHSTPIRNQVPALQPIMSPGLLSPQLSPQLVRQQIAMAHLINQQIAVSRLLAHQHPQAINQQFLNHPPIPRAVKPEPTNSSVEVSPDIYQQVRDELKRASVSQAVFARVAFNRTQGLLSEILRKEEDPRTASQSLLVNLRAMQNFLNLPEVERDRIYQDERERSMNPNVSMVSSASSSPSSSRTPQAKTSTPTTDLPIKVDGANVNITAAIYDEIQQEMKRAKVSQALFAKVAANKSQGWLCELLRWKENPSPENRTLWENLCTIRRFLNLPQHERDVIYEEESRHHHSERMQHVVQLPPEPVQVLHRQQSQPTKESSPPREEAPPPPPPTEDSCAKKPRSRTKISLEALGILQSFIHDVGLYPDQEAIHTLSAQLDLPKHTIIKFFQNQRYHVKHHGKLKEHLGSAVDVAEYKDEELLTESEENDSEEGSEEMYKVEAEEENADKSKAAPAETDQR.

Residues 1–47 are disordered; sequence MERRSESPCLRDSPDRRSGSPDVKGPPPVKVARLEQNGSPMGARGRP. The residue at position 20 (Ser20) is a Phosphoserine. Glycyl lysine isopeptide (Lys-Gly) (interchain with G-Cter in SUMO2) cross-links involve residues Lys24 and Lys30. Residue Ser39 is modified to Phosphoserine. The region spanning 57-158 is the CMP domain; that stretch reads GLMIPVFCVV…VVTLKIQLQS (102 aa). Lys161 participates in a covalent cross-link: Glycyl lysine isopeptide (Lys-Gly) (interchain with G-Cter in SUMO2). A CUTL domain is found at 161–234; it reads KLEDLPAEQW…WYKKYKKIKV (74 aa). Lys233 is covalently cross-linked (Glycyl lysine isopeptide (Lys-Gly) (interchain with G-Cter in SUMO)). Lys350 participates in a covalent cross-link: Glycyl lysine isopeptide (Lys-Gly) (interchain with G-Cter in SUMO); alternate. Lys350 is covalently cross-linked (Glycyl lysine isopeptide (Lys-Gly) (interchain with G-Cter in SUMO2); alternate). The CUT 1 DNA-binding region spans 350–437; it reads KPEPTNSSVE…ERDRIYQDER (88 aa). The disordered stretch occupies residues 435–473; sequence DERERSMNPNVSMVSSASSSPSSSRTPQAKTSTPTTDLP. Residues 441-458 are compositionally biased toward low complexity; sequence MNPNVSMVSSASSSPSSS. Ser454 bears the Phosphoserine mark. Polar residues predominate over residues 459-470; the sequence is RTPQAKTSTPTT. The residue at position 467 (Thr467) is a Phosphothreonine. The CUT 2 DNA-binding region spans 473-560; sequence PIKVDGANVN…ERDVIYEEES (88 aa). Lys475 is covalently cross-linked (Glycyl lysine isopeptide (Lys-Gly) (interchain with G-Cter in SUMO2)). 2 disordered regions span residues 580–617 and 691–733; these read QVLH…KPRS and DEEL…TDQR. Ser594 is subject to Phosphoserine. Residues 615 to 674 constitute a DNA-binding region (homeobox); that stretch reads PRSRTKISLEALGILQSFIHDVGLYPDQEAIHTLSAQLDLPKHTIIKFFQNQRYHVKHHG. The segment covering 694–708 has biased composition (acidic residues); sequence LLTESEENDSEEGSE. A compositionally biased stretch (basic and acidic residues) spans 709–733; sequence EMYKVEAEEENADKSKAAPAETDQR. Lys724 is covalently cross-linked (Glycyl lysine isopeptide (Lys-Gly) (interchain with G-Cter in SUMO2)).

The protein belongs to the CUT homeobox family. In terms of assembly, interacts with PIAS1. Interacts with ATF4 and RUNX2; resulting in enhanced DNA binding and transactivation by these transcription factors. Post-translationally, sumoylated by PIAS1. Sumoylation promotes nuclear localization, but represses transcription factor activity. Expressed in cortical neurons that extend axons across the corpus callosum. Also expressed in branchial arches and in cells of the osteoblast lineage, but not in chondrocytes and osteoclasts.

It is found in the nucleus matrix. In terms of biological role, binds to DNA, at nuclear matrix- or scaffold-associated regions. Thought to recognize the sugar-phosphate structure of double-stranded DNA. Transcription factor controlling nuclear gene expression, by binding to matrix attachment regions (MARs) of DNA and inducing a local chromatin-loop remodeling. Acts as a docking site for several chromatin remodeling enzymes and also by recruiting corepressors (HDACs) or coactivators (HATs) directly to promoters and enhancers. Required for the initiation of the upper-layer neurons (UL1) specific genetic program and for the inactivation of deep-layer neurons (DL) and UL2 specific genes, probably by modulating Bcl11b expression. Repressor of Ctip2 and regulatory determinant of corticocortical connections in the developing cerebral cortex. May play an important role in palate formation. Acts as a molecular node in a transcriptional network regulating skeletal development and osteoblast differentiation. This chain is DNA-binding protein SATB2 (Satb2), found in Mus musculus (Mouse).